The sequence spans 934 residues: Glycine dehydrogenase (decarboxylating) (934 aa).

Lys-687 is subject to N6-(pyridoxal phosphate)lysine.

It belongs to the GcvP family. As to quaternary structure, the glycine cleavage system is composed of four proteins: P, T, L and H. Requires pyridoxal 5'-phosphate as cofactor.

The enzyme catalyses N(6)-[(R)-lipoyl]-L-lysyl-[glycine-cleavage complex H protein] + glycine + H(+) = N(6)-[(R)-S(8)-aminomethyldihydrolipoyl]-L-lysyl-[glycine-cleavage complex H protein] + CO2. In terms of biological role, the glycine cleavage system catalyzes the degradation of glycine. The P protein binds the alpha-amino group of glycine through its pyridoxal phosphate cofactor; CO(2) is released and the remaining methylamine moiety is then transferred to the lipoamide cofactor of the H protein. The protein is Glycine dehydrogenase (decarboxylating) of Nocardia farcinica (strain IFM 10152).